Here is a 204-residue protein sequence, read N- to C-terminus: LexA repressor (204 aa).

The H-T-H motif DNA-binding region spans 27–47 (VREIGEAVGLASSSTVHGHLA). Residues Ser-126 and Lys-164 each act as for autocatalytic cleavage activity in the active site.

Belongs to the peptidase S24 family. In terms of assembly, homodimer.

The catalysed reaction is Hydrolysis of Ala-|-Gly bond in repressor LexA.. Its function is as follows. Represses a number of genes involved in the response to DNA damage (SOS response), including recA and lexA. In the presence of single-stranded DNA, RecA interacts with LexA causing an autocatalytic cleavage which disrupts the DNA-binding part of LexA, leading to derepression of the SOS regulon and eventually DNA repair. The sequence is that of LexA repressor from Listeria monocytogenes serotype 4b (strain CLIP80459).